Reading from the N-terminus, the 419-residue chain is Homeobox-containing protein 1 (419 aa).

An HNF-p1 domain is found at 18 to 49 (DEPRFTIEQIDLLQRLRRTGMTKHEILHALET). Residues 56–152 (EHSDKFGRRS…GQRSYSFEAS (97 aa)) are disordered. Residue Lys60 forms a Glycyl lysine isopeptide (Lys-Gly) (interchain with G-Cter in SUMO2) linkage. 2 stretches are compositionally biased toward low complexity: residues 64–73 (RSSYGGSSYG) and 81–93 (ASSSTATASTQTQ). The segment covering 94–132 (HSGMSPSPSNSYDTSPLPCTTNQNGRENNDRLSTSNGKM) has biased composition (polar residues). Lys131 participates in a covalent cross-link: Glycyl lysine isopeptide (Lys-Gly) (interchain with G-Cter in SUMO2). In terms of domain architecture, POU-specific atypical spans 145–241 (RSYSFEASEE…PGATLSMRPA (97 aa)). Phosphoserine is present on Ser148. Residue Lys161 forms a Glycyl lysine isopeptide (Lys-Gly) (interchain with G-Cter in SUMO2) linkage. At Ser170 the chain carries Phosphoserine. Residues Lys174, Lys217, and Lys310 each participate in a glycyl lysine isopeptide (Lys-Gly) (interchain with G-Cter in SUMO2) cross-link. A DNA-binding region (homeobox) is located at residues 267 to 341 (RRGSRFTWRK…NRRKEIKRRA (75 aa)). The tract at residues 352-384 (IDVQSPGGHSNSDDVDGNDYSEQDDSTSHSDHQ) is disordered. Over residues 364 to 376 (DDVDGNDYSEQDD) the composition is skewed to acidic residues. Residue Lys412 forms a Glycyl lysine isopeptide (Lys-Gly) (interchain with G-Cter in SUMO1); alternate linkage. Lys412 participates in a covalent cross-link: Glycyl lysine isopeptide (Lys-Gly) (interchain with G-Cter in SUMO2); alternate.

Associates with the telomerase holoenzyme complex. Interacts with DKC1, XRCC6 and COIL.

The protein resides in the nucleus. It localises to the cytoplasm. It is found in the chromosome. Its subcellular location is the telomere. The protein localises to the cajal body. The protein resides in the PML body. Binds directly to 5'-TTAGGG-3' repeats in telomeric DNA. Associates with the telomerase complex at sites of active telomere processing and positively regulates telomere elongation. Important for TERT binding to chromatin, indicating a role in recruitment of the telomerase complex to telomeres. Also plays a role in the alternative lengthening of telomeres (ALT) pathway in telomerase-negative cells where it promotes formation and/or maintenance of ALT-associated promyelocytic leukemia bodies (APBs). Enhances formation of telomere C-circles in ALT cells, suggesting a possible role in telomere recombination. Might also be involved in the DNA damage response at telomeres. This Mus musculus (Mouse) protein is Homeobox-containing protein 1 (Hmbox1).